A 312-amino-acid polypeptide reads, in one-letter code: Non-structural protein 12A (312 aa).

Residues 1 to 23 are compositionally biased toward low complexity; the sequence is MFKSGSGSLKRSGSISSVKSFSG. Disordered stretches follow at residues 1–37, 62–97, and 112–159; these read MFKS…RGSV, FVPE…YNQN, and SSKG…SHGT. Basic and acidic residues predominate over residues 63–73; that stretch reads VPEKTKSEGNL. Polar residues predominate over residues 74 to 97; sequence KNKSSVITGNFGSSGPTNAHYNQN. Over residues 122–134 the composition is skewed to basic and acidic residues; it reads DARHTATDSRLSQ. The segment covering 135 to 154 has biased composition (polar residues); that stretch reads EVKQPFSEENASGNDLNTGR.

It belongs to the phytoreovirus non-structural protein Pns12A family.

The protein localises to the host cytoplasm. Constituent of viral factories. The polypeptide is Non-structural protein 12A (Rice dwarf virus (isolate O) (RDV)).